Here is a 300-residue protein sequence, read N- to C-terminus: Epimerase family protein SAV0769 (300 aa).

It belongs to the NAD(P)-dependent epimerase/dehydratase family. SDR39U1 subfamily.

The sequence is that of Epimerase family protein SAV0769 from Staphylococcus aureus (strain Mu50 / ATCC 700699).